The following is a 376-amino-acid chain: MSPVQLAEKNYERDEQFTKALHGESYKKTGLSALIAKSKDAASVAAEGYFKHWDGGISKDDEEKRLNDYSQLTHHYYNLVTDFYEYGWGSSFHFSRYYKGEAFRQATARHEHFLAHKMNLNENMKVLDVGCGVGGPGREITRFTDCEIVGLNNNDYQIERANHYAKKYHLDHKLSYVKGDFMQMDFEPESFDAVYAIEATVHAPVLEGVYSEIYKVLKPGGVFGVYEWVMTDKYDETNEEHRKIAYGIEVGDGIPKMYSRKVAEQALKNVGFEIEYQKDLADVDDEIPWYYPLSGDLKFCQTFGDYLTVFRTSRIGRFITTESVGLMEKIGLAPKGSKQVTHALEDAAVNLVEGGRQKLFTPMMLYVVRKPLEKKD.

Belongs to the class I-like SAM-binding methyltransferase superfamily. Erg6/SMT family.

The enzyme catalyses zymosterol + S-adenosyl-L-methionine = fecosterol + S-adenosyl-L-homocysteine + H(+). The protein operates within steroid metabolism; ergosterol biosynthesis; ergosterol from zymosterol: step 1/5. With respect to regulation, substrate analogs 25-azalanosterol and 24(R,S),25-epiminolanosterol act as inhibitors. In terms of biological role, sterol 24-C-methyltransferase; part of the third module of ergosterol biosynthesis pathway that includes the late steps of the pathway. ERG6 catalyzes the methyl transfer from S-adenosyl-methionine to the C-24 of zymosterol to form fecosterol. The third module or late pathway involves the ergosterol synthesis itself through consecutive reactions that mainly occur in the endoplasmic reticulum (ER) membrane. Firstly, the squalene synthase ERG9 catalyzes the condensation of 2 farnesyl pyrophosphate moieties to form squalene, which is the precursor of all steroids. Squalene synthase is crucial for balancing the incorporation of farnesyl diphosphate (FPP) into sterol and nonsterol isoprene synthesis. Secondly, the squalene epoxidase ERG1 catalyzes the stereospecific oxidation of squalene to (S)-2,3-epoxysqualene, which is considered to be a rate-limiting enzyme in steroid biosynthesis. Then, the lanosterol synthase ERG7 catalyzes the cyclization of (S)-2,3 oxidosqualene to lanosterol, a reaction that forms the sterol core. In the next steps, lanosterol is transformed to zymosterol through a complex process involving various demethylation, reduction and desaturation reactions. The lanosterol 14-alpha-demethylase ERG11 (also known as CYP51) catalyzes C14-demethylation of lanosterol to produce 4,4'-dimethyl cholesta-8,14,24-triene-3-beta-ol, which is critical for ergosterol biosynthesis. The C-14 reductase ERG24 reduces the C14=C15 double bond of 4,4-dimethyl-cholesta-8,14,24-trienol to produce 4,4-dimethyl-cholesta-8,24-dienol. 4,4-dimethyl-cholesta-8,24-dienol is substrate of the C-4 demethylation complex ERG25-ERG26-ERG27 in which ERG25 catalyzes the three-step monooxygenation required for the demethylation of 4,4-dimethyl and 4alpha-methylsterols, ERG26 catalyzes the oxidative decarboxylation that results in a reduction of the 3-beta-hydroxy group at the C-3 carbon to an oxo group, and ERG27 is responsible for the reduction of the keto group on the C-3. ERG28 has a role as a scaffold to help anchor ERG25, ERG26 and ERG27 to the endoplasmic reticulum and ERG29 regulates the activity of the iron-containing C4-methylsterol oxidase ERG25. Then, the sterol 24-C-methyltransferase ERG6 catalyzes the methyl transfer from S-adenosyl-methionine to the C-24 of zymosterol to form fecosterol. The C-8 sterol isomerase ERG2 catalyzes the reaction which results in unsaturation at C-7 in the B ring of sterols and thus converts fecosterol to episterol. The sterol-C5-desaturase ERG3 then catalyzes the introduction of a C-5 double bond in the B ring to produce 5-dehydroepisterol. The C-22 sterol desaturase ERG5 further converts 5-dehydroepisterol into ergosta-5,7,22,24(28)-tetraen-3beta-ol by forming the C-22(23) double bond in the sterol side chain. Finally, ergosta-5,7,22,24(28)-tetraen-3beta-ol is substrate of the C-24(28) sterol reductase ERG4 to produce ergosterol. The chain is Sterol 24-C-methyltransferase from Candida albicans (strain SC5314 / ATCC MYA-2876) (Yeast).